A 243-amino-acid polypeptide reads, in one-letter code: Adenosine 5'-phosphosulfate reductase (243 aa).

It belongs to the PAPS reductase family. CysH subfamily. [4Fe-4S] cluster serves as cofactor.

It localises to the cytoplasm. It carries out the reaction [thioredoxin]-disulfide + sulfite + AMP + 2 H(+) = adenosine 5'-phosphosulfate + [thioredoxin]-dithiol. It participates in sulfur metabolism; hydrogen sulfide biosynthesis; sulfite from sulfate. Functionally, catalyzes the formation of sulfite from adenosine 5'-phosphosulfate (APS) using thioredoxin as an electron donor. This is Adenosine 5'-phosphosulfate reductase from Staphylococcus haemolyticus (strain JCSC1435).